Consider the following 266-residue polypeptide: DNA-directed RNA polymerase subunit Rpo3 (266 aa).

[3Fe-4S] cluster is bound by residues C205, C208, and C211.

It belongs to the archaeal Rpo3/eukaryotic RPB3 RNA polymerase subunit family. In terms of assembly, part of the RNA polymerase complex. It depends on [3Fe-4S] cluster as a cofactor.

The protein resides in the cytoplasm. It catalyses the reaction RNA(n) + a ribonucleoside 5'-triphosphate = RNA(n+1) + diphosphate. Functionally, DNA-dependent RNA polymerase (RNAP) catalyzes the transcription of DNA into RNA using the four ribonucleoside triphosphates as substrates. In Methanosarcina mazei (strain ATCC BAA-159 / DSM 3647 / Goe1 / Go1 / JCM 11833 / OCM 88) (Methanosarcina frisia), this protein is DNA-directed RNA polymerase subunit Rpo3.